A 382-amino-acid polypeptide reads, in one-letter code: Galactokinase (382 aa).

34 to 37 contributes to the substrate binding site; that stretch reads EHTD. 124-130 provides a ligand contact to ATP; it reads GAGLSSS. Ser-130 and Glu-162 together coordinate Mg(2+). The Proton acceptor role is filled by Asp-174. Tyr-223 contributes to the substrate binding site.

This sequence belongs to the GHMP kinase family. GalK subfamily.

Its subcellular location is the cytoplasm. It catalyses the reaction alpha-D-galactose + ATP = alpha-D-galactose 1-phosphate + ADP + H(+). The protein operates within carbohydrate metabolism; galactose metabolism. In terms of biological role, catalyzes the transfer of the gamma-phosphate of ATP to D-galactose to form alpha-D-galactose-1-phosphate (Gal-1-P). The chain is Galactokinase from Salmonella choleraesuis (strain SC-B67).